Reading from the N-terminus, the 360-residue chain is Thioredoxin domain-containing protein 15 (360 aa).

Positions 1 to 32 (MVPAAGRRPPRVMRLLGWWQVLLWVLGLPVRG) are cleaved as a signal peptide. Residues 33–321 (VEVAEESGRL…GPLPSTLIKS (289 aa)) are Extracellular-facing. The disordered stretch occupies residues 141 to 173 (PDREEEYYTEPEVAESDAAPTEDSNNTESLKSP). A compositionally biased stretch (acidic residues) spans 143–155 (REEEYYTEPEVAE). A Thioredoxin domain is found at 153-296 (VAESDAAPTE…LKIFIFNQTG (144 aa)). Asn-187, Asn-194, Asn-206, and Asn-293 each carry an N-linked (GlcNAc...) asparagine glycan. The helical transmembrane segment at 322–342 (VDWLLVFSLFFLISFIMYATI) threads the bilayer. Topologically, residues 343–360 (RTESIRWLIPGQEQEHVE) are cytoplasmic.

It is found in the cell projection. It localises to the cilium membrane. Its function is as follows. Acts as a positive regulator of ciliary hedgehog signaling. Involved in ciliogenesis. This Homo sapiens (Human) protein is Thioredoxin domain-containing protein 15 (TXNDC15).